A 302-amino-acid chain; its full sequence is Probable 2-(5''-triphosphoribosyl)-3'-dephosphocoenzyme-A synthase (302 aa).

The protein belongs to the CitG/MdcB family.

The catalysed reaction is 3'-dephospho-CoA + ATP = 2'-(5''-triphospho-alpha-D-ribosyl)-3'-dephospho-CoA + adenine. This chain is Probable 2-(5''-triphosphoribosyl)-3'-dephosphocoenzyme-A synthase, found in Albidiferax ferrireducens (strain ATCC BAA-621 / DSM 15236 / T118) (Rhodoferax ferrireducens).